A 123-amino-acid chain; its full sequence is Cytochrome b-c1 complex subunit 7 (123 aa).

This sequence belongs to the UQCRB/QCR7 family. As to quaternary structure, component of the ubiquinol-cytochrome c oxidoreductase (cytochrome b-c1 complex, complex III, CIII), a multisubunit enzyme composed of 3 respiratory subunits cytochrome b, cytochrome c1 and Rieske protein, 2 core protein subunits, and additional low-molecular weight protein subunits. The complex exists as an obligatory dimer and forms supercomplexes (SCs) in the inner mitochondrial membrane with cytochrome c oxidase (complex IV, CIV). Post-translationally, the N-terminus is blocked.

The protein localises to the mitochondrion inner membrane. Functionally, component of the ubiquinol-cytochrome c oxidoreductase, a multisubunit transmembrane complex that is part of the mitochondrial electron transport chain which drives oxidative phosphorylation. The respiratory chain contains 3 multisubunit complexes succinate dehydrogenase (complex II, CII), ubiquinol-cytochrome c oxidoreductase (cytochrome b-c1 complex, complex III, CIII) and cytochrome c oxidase (complex IV, CIV), that cooperate to transfer electrons derived from NADH and succinate to molecular oxygen, creating an electrochemical gradient over the inner membrane that drives transmembrane transport and the ATP synthase. The cytochrome b-c1 complex catalyzes electron transfer from ubiquinol to cytochrome c, linking this redox reaction to translocation of protons across the mitochondrial inner membrane, with protons being carried across the membrane as hydrogens on the quinol. In the process called Q cycle, 2 protons are consumed from the matrix, 4 protons are released into the intermembrane space and 2 electrons are passed to cytochrome c. This is Cytochrome b-c1 complex subunit 7 from Solanum tuberosum (Potato).